A 258-amino-acid chain; its full sequence is MMVLPVPVAPWTAALTVLLMVLNKSVVQGRTTPENYLFRAWQECHLTHGRYRYVERYIYNQEEYVRFDSDVGVFRAVTELGRSWADDFNSRKEALEQKRAAPDTGCRHNHELNQRLSQSLIAQPKVHVSPSKGGTLNHHNLLVCQVTDFYPGNIQVRWFRNNQEETTGISTTNPIRNGDWTFQILVTLEMTPQRGDVYTCHVEHPSLDRPITVEWRAQSDSARNKTLTGVGGLVLGLIFLAVGLIMHVRSKKAQRGSR.

Residues 1–29 form the signal peptide; sequence MMVLPVPVAPWTAALTVLLMVLNKSVVQG. The segment at 30 to 121 is beta-1; that stretch reads RTTPENYLFR…LNQRLSQSLI (92 aa). At 30-225 the chain is on the extracellular side; it reads RTTPENYLFR…RAQSDSARNK (196 aa). Intrachain disulfides connect Cys-44-Cys-106 and Cys-144-Cys-200. The interval 122–215 is beta-2; the sequence is AQPKVHVSPS…SLDRPITVEW (94 aa). The region spanning 124–212 is the Ig-like C1-type domain; it reads PKVHVSPSKG…EHPSLDRPIT (89 aa). The tract at residues 216 to 225 is connecting peptide; it reads RAQSDSARNK. An N-linked (GlcNAc...) asparagine glycan is attached at Asn-224. Residues 226-246 traverse the membrane as a helical segment; it reads TLTGVGGLVLGLIFLAVGLIM. The Cytoplasmic segment spans residues 247–258; it reads HVRSKKAQRGSR.

The protein belongs to the MHC class II family.

The protein localises to the membrane. The protein is SMH class II histocompatibility antigen, beta-1 chain of Spalax ehrenbergi (Middle East blind mole rat).